Reading from the N-terminus, the 88-residue chain is Putative regulatory protein Ava_1474 (88 aa).

The protein belongs to the RemA family.

In Trichormus variabilis (strain ATCC 29413 / PCC 7937) (Anabaena variabilis), this protein is Putative regulatory protein Ava_1474.